The chain runs to 183 residues: ATP synthase subunit b, chloroplastic (183 aa).

Residues Leu-27 to Leu-49 form a helical membrane-spanning segment.

Belongs to the ATPase B chain family. In terms of assembly, F-type ATPases have 2 components, F(1) - the catalytic core - and F(0) - the membrane proton channel. F(1) has five subunits: alpha(3), beta(3), gamma(1), delta(1), epsilon(1). F(0) has four main subunits: a(1), b(1), b'(1) and c(10-14). The alpha and beta chains form an alternating ring which encloses part of the gamma chain. F(1) is attached to F(0) by a central stalk formed by the gamma and epsilon chains, while a peripheral stalk is formed by the delta, b and b' chains.

The protein localises to the plastid. Its subcellular location is the chloroplast thylakoid membrane. In terms of biological role, f(1)F(0) ATP synthase produces ATP from ADP in the presence of a proton or sodium gradient. F-type ATPases consist of two structural domains, F(1) containing the extramembraneous catalytic core and F(0) containing the membrane proton channel, linked together by a central stalk and a peripheral stalk. During catalysis, ATP synthesis in the catalytic domain of F(1) is coupled via a rotary mechanism of the central stalk subunits to proton translocation. Its function is as follows. Component of the F(0) channel, it forms part of the peripheral stalk, linking F(1) to F(0). The protein is ATP synthase subunit b, chloroplastic of Oryza nivara (Indian wild rice).